We begin with the raw amino-acid sequence, 258 residues long: Small ribosomal subunit protein uS2 (258 aa).

The segment at 226–258 (QGVSNEEVAAEQNIDLDEKEKSEETEATEATEE) is disordered.

The protein belongs to the universal ribosomal protein uS2 family.

In Staphylococcus aureus (strain COL), this protein is Small ribosomal subunit protein uS2.